The sequence spans 549 residues: Glucose-6-phosphate isomerase (549 aa).

Residues lysine 80, lysine 228, and lysine 234 each carry the N6-acetyllysine modification. The active-site Proton donor is glutamate 355. Active-site residues include histidine 386 and lysine 514.

This sequence belongs to the GPI family.

The protein resides in the cytoplasm. It carries out the reaction alpha-D-glucose 6-phosphate = beta-D-fructose 6-phosphate. It participates in carbohydrate biosynthesis; gluconeogenesis. Its pathway is carbohydrate degradation; glycolysis; D-glyceraldehyde 3-phosphate and glycerone phosphate from D-glucose: step 2/4. Functionally, catalyzes the reversible isomerization of glucose-6-phosphate to fructose-6-phosphate. The polypeptide is Glucose-6-phosphate isomerase (Escherichia coli O127:H6 (strain E2348/69 / EPEC)).